Here is a 151-residue protein sequence, read N- to C-terminus: UPF0098 protein MTH_273 (151 aa).

Belongs to the UPF0098 family.

This Methanothermobacter thermautotrophicus (strain ATCC 29096 / DSM 1053 / JCM 10044 / NBRC 100330 / Delta H) (Methanobacterium thermoautotrophicum) protein is UPF0098 protein MTH_273.